The primary structure comprises 480 residues: REST corepressor 1 (480 aa).

The disordered stretch occupies residues 1–105 (MPAMVEKGPE…GGGMRVGPQY (105 aa)). 2 stretches are compositionally biased toward low complexity: residues 21–58 (AASA…AAAA) and 66–89 (SLAA…SGSS). Residues 72–251 (PNGNSGSNSW…RHARKQKRER (180 aa)) form an interaction with HDAC1 region. In terms of domain architecture, ELM2 spans 97–183 (GGMRVGPQYQ…KSLADLPNFT (87 aa)). Residue Lys116 forms a Glycyl lysine isopeptide (Lys-Gly) (interchain with G-Cter in SUMO2) linkage. A Phosphoserine modification is found at Ser121. Residues 184–235 (PFPDEWTVEDKVLFEQAFSFHGKTFHRIQQMLPDKSIASLVKFYYSWKKTRT) form the SANT 1 domain. Residues 238–265 (SVMDRHARKQKREREESEDELEETNGSN) adopt a coiled-coil conformation. The segment at 238–308 (SVMDRHARKQ…AKNRAKRKPP (71 aa)) is disordered. At Ser254 the chain carries Phosphoserine. Positions 272-282 (DPNKESKKEVP) are enriched in basic and acidic residues. The interaction with KDM1A stretch occupies residues 290–378 (VKKEKHSTQA…LPEVIQKCNA (89 aa)). A Glycyl lysine isopeptide (Lys-Gly) (interchain with G-Cter in SUMO2) cross-link involves residue Lys291. Residues 328 to 363 (ATTVLRQLDMELVSIKRQIQNIKQTNSALKEKLDGG) are a coiled coil. Residues 375-426 (KCNARWTTEEQLLAVQAIRKYGRDFQAISDVIGNKSVVQVKNFFVNYRRRFN) enclose the SANT 2 domain. The segment at 436-466 (AEHGKDETNGPANQKPVKSPESSIKIPEEED) is disordered. At Ser454 the chain carries Phosphoserine. A Glycyl lysine isopeptide (Lys-Gly) (interchain with G-Cter in SUMO2) cross-link involves residue Lys460.

Belongs to the CoREST family. In terms of assembly, component of a BHC histone deacetylase complex that contains HDAC1, HDAC2, HMG20B/BRAF35, KDM1A, RCOR1/CoREST and PHF21A/BHC80. The BHC complex may also contain ZMYM2, ZNF217, ZMYM3, GSE1 and GTF2I. Interacts with REST. Interacts with the SMARCE1/BAF57, suggesting that the BHC complex may recruit the ATP-dependent chromatin-remodeling SWI-SNF complex. Interacts directly with GFI1 and GFI1B in a RCOR/GFI/KDM1A/HDAC complex. Interacts with INMS1. Interacts with SOX2. In terms of tissue distribution, expressed in the external germinal layer (EGL) and internal granular layer (IGL) of the cerebellum and in Purkinje cells (at protein level).

The protein localises to the nucleus. Essential component of the BHC complex, a corepressor complex that represses transcription of neuron-specific genes in non-neuronal cells. The BHC complex is recruited at RE1/NRSE sites by REST and acts by deacetylating and demethylating specific sites on histones, thereby acting as a chromatin modifier. In the BHC complex, it serves as a molecular beacon for the recruitment of molecular machinery, including MeCP2 and SUV39H1, that imposes silencing across a chromosomal interval. Plays a central role in demethylation of Lys-4 of histone H3 by promoting demethylase activity of KDM1A on core histones and nucleosomal substrates. It also protects KDM1A from the proteasome. Component of a RCOR/GFI/KDM1A/HDAC complex that suppresses, via histone deacetylase (HDAC) recruitment, a number of genes implicated in multilineage blood cell development and controls hematopoietic differentiation. This is REST corepressor 1 (Rcor1) from Mus musculus (Mouse).